The primary structure comprises 392 residues: Casein kinase II subunit alpha (392 aa).

The 286-residue stretch at 39–324 (YQLVRKLGRG…AREAMDHPYF (286 aa)) folds into the Protein kinase domain. Residues 45-53 (LGRGKYSEV) and lysine 68 contribute to the ATP site. Aspartate 156 serves as the catalytic Proton acceptor. The segment at 334-355 (MGGSNMPSGSSTPVSSASMMSG) is disordered. Over residues 337–354 (SNMPSGSSTPVSSASMMS) the composition is skewed to low complexity.

The protein belongs to the protein kinase superfamily. Ser/Thr protein kinase family. CK2 subfamily. As to quaternary structure, tetramer composed of an alpha chain, an alpha' and two beta chains.

Its subcellular location is the nucleus. The catalysed reaction is L-seryl-[protein] + ATP = O-phospho-L-seryl-[protein] + ADP + H(+). It catalyses the reaction L-threonyl-[protein] + ATP = O-phospho-L-threonyl-[protein] + ADP + H(+). In terms of biological role, catalytic subunit of a constitutively active serine/threonine-protein kinase complex that phosphorylates a large number of substrates containing acidic residues C-terminal to the phosphorylated serine or threonine. Regulates numerous cellular processes, such as cell cycle progression, apoptosis and transcription, as well as viral infection. May act as a regulatory node which integrates and coordinates numerous signals leading to an appropriate cellular response. During mitosis, functions as a component of the p53/TP53-dependent spindle assembly checkpoint (SAC) that maintains cyclin-B-CDK1 activity and G2 arrest in response to spindle damage. Can also negatively regulate apoptosis. Phosphorylates the caspases CASP9 and CASP2 and the apoptotic regulator NOL3. Phosphorylation protects CASP9 from cleavage and activation by CASP8, and inhibits the dimerization of CASP2 and activation of CASP8. Plays an important role in the circadian clock function by phosphorylating BMAL1. In Xenopus laevis (African clawed frog), this protein is Casein kinase II subunit alpha (csnk2a1).